A 288-amino-acid polypeptide reads, in one-letter code: Bifunctional protein FolD (288 aa).

Residues 166-168 (GRS), S191, and I232 each bind NADP(+).

It belongs to the tetrahydrofolate dehydrogenase/cyclohydrolase family. As to quaternary structure, homodimer.

The catalysed reaction is (6R)-5,10-methylene-5,6,7,8-tetrahydrofolate + NADP(+) = (6R)-5,10-methenyltetrahydrofolate + NADPH. The enzyme catalyses (6R)-5,10-methenyltetrahydrofolate + H2O = (6R)-10-formyltetrahydrofolate + H(+). It functions in the pathway one-carbon metabolism; tetrahydrofolate interconversion. Catalyzes the oxidation of 5,10-methylenetetrahydrofolate to 5,10-methenyltetrahydrofolate and then the hydrolysis of 5,10-methenyltetrahydrofolate to 10-formyltetrahydrofolate. This chain is Bifunctional protein FolD, found in Rickettsia rickettsii (strain Iowa).